The following is a 275-amino-acid chain: uncharacterized protein (275 aa).

This is an uncharacterized protein from Methanocaldococcus jannaschii (strain ATCC 43067 / DSM 2661 / JAL-1 / JCM 10045 / NBRC 100440) (Methanococcus jannaschii).